We begin with the raw amino-acid sequence, 337 residues long: Protein EXORDIUM-like 3 (337 aa).

The signal sequence occupies residues 1–25 (MHSLPVNLVLTVLTVFLTSPAQVIG). 3 N-linked (GlcNAc...) asparagine glycosylation sites follow: Asn34, Asn66, and Asn119.

The protein belongs to the EXORDIUM family.

The protein localises to the secreted. Its subcellular location is the extracellular space. The protein resides in the apoplast. May play a role in a brassinosteroid-dependent regulation of growth and development. The polypeptide is Protein EXORDIUM-like 3 (EXL3) (Arabidopsis thaliana (Mouse-ear cress)).